A 356-amino-acid polypeptide reads, in one-letter code: Fe(3+) ions import ATP-binding protein FbpC 2 (356 aa).

In terms of domain architecture, ABC transporter spans 12–246 (LTVKNLNKFF…PNHLETAKFM (235 aa)). 44–51 (GSSGCGKT) contributes to the ATP binding site.

The protein belongs to the ABC transporter superfamily. Fe(3+) ion importer (TC 3.A.1.10) family. In terms of assembly, the complex is composed of two ATP-binding proteins (FbpC), two transmembrane proteins (FbpB) and a solute-binding protein (FbpA).

It is found in the cell inner membrane. It carries out the reaction Fe(3+)(out) + ATP + H2O = Fe(3+)(in) + ADP + phosphate + H(+). In terms of biological role, part of the ABC transporter complex FbpABC involved in Fe(3+) ions import. Responsible for energy coupling to the transport system. This is Fe(3+) ions import ATP-binding protein FbpC 2 from Haemophilus influenzae (strain ATCC 51907 / DSM 11121 / KW20 / Rd).